A 296-amino-acid chain; its full sequence is uncharacterized protein (296 aa).

This sequence to Synechocystis PCC 6803 sll0787 and M.jannaschii MJ0640.

This is an uncharacterized protein from Methanocaldococcus jannaschii (strain ATCC 43067 / DSM 2661 / JAL-1 / JCM 10045 / NBRC 100440) (Methanococcus jannaschii).